The chain runs to 556 residues: MSVSSFNRRWAAVILEALTRHGVRHVCIAPGSRSTPLTLAAAENRAFIHHTHFDERGLGHLALGLAKVSKAPVAVIVTSGTAVANLYPALIEAGLTGEKLVLLTADRPPELIDCGANQAIRQPGIFASHPAEALSLPRPTQDIPASWLVSTLDHAMGTLRHGALHINCPFAEPLYGELNDTGVEWQQTLGDWWQSDKPWLRAQTHLQSGQQRDWFHWRQKRGVILAGRMTAAEGKQVAEWAKTLGWPLIGDVLSQTGQPLPCADLWLGNAKAVTELARAQIVIQLGSSLTGKRVLQWQSTCEPEEYWLVDSLEGRLDPAHHRGRRLVSTIGDWLEDHPAEKRQAWATDIPELSRLAWDLTTQQCERFGEAELAHRIRQYLPDQGQLFVGNSLVVRLIDALSKLPAGYPVYSNRGASGIDGLISTAAGVQRASTKPTLAIVGDLSALYDLNALALLRQASAPFVLIVVNNNGGQIFSLLPTPQSERERFYLMPQNVQFEHAAAMFSLKYHRPQSWSELDDAMSTAWRQPGATLIELVVNDSDGAQKLQHLLAQVSHL.

The protein belongs to the TPP enzyme family. MenD subfamily. Homodimer. The cofactor is Mg(2+). Mn(2+) is required as a cofactor. Thiamine diphosphate serves as cofactor.

The enzyme catalyses isochorismate + 2-oxoglutarate + H(+) = 5-enolpyruvoyl-6-hydroxy-2-succinyl-cyclohex-3-ene-1-carboxylate + CO2. Its pathway is quinol/quinone metabolism; 1,4-dihydroxy-2-naphthoate biosynthesis; 1,4-dihydroxy-2-naphthoate from chorismate: step 2/7. It functions in the pathway quinol/quinone metabolism; menaquinone biosynthesis. Its function is as follows. Catalyzes the thiamine diphosphate-dependent decarboxylation of 2-oxoglutarate and the subsequent addition of the resulting succinic semialdehyde-thiamine pyrophosphate anion to isochorismate to yield 2-succinyl-5-enolpyruvyl-6-hydroxy-3-cyclohexene-1-carboxylate (SEPHCHC). The protein is 2-succinyl-5-enolpyruvyl-6-hydroxy-3-cyclohexene-1-carboxylate synthase of Enterobacter sp. (strain 638).